The sequence spans 476 residues: Ribosomal protein uS12 methylthiotransferase RimO (476 aa).

The MTTase N-terminal domain occupies 33–143 (NRIGFVSLGC…VLKHVHKYVP (111 aa)). [4Fe-4S] cluster-binding residues include cysteine 42, cysteine 78, cysteine 107, cysteine 175, cysteine 179, and cysteine 182. A Radical SAM core domain is found at 161–398 (LTPKHYAYLK…MEVQAEISAE (238 aa)). The 67-residue stretch at 401 to 467 (ARFVGRTMDI…EHDLWAELVD (67 aa)) folds into the TRAM domain.

It belongs to the methylthiotransferase family. RimO subfamily. [4Fe-4S] cluster is required as a cofactor.

The protein localises to the cytoplasm. The catalysed reaction is L-aspartate(89)-[ribosomal protein uS12]-hydrogen + (sulfur carrier)-SH + AH2 + 2 S-adenosyl-L-methionine = 3-methylsulfanyl-L-aspartate(89)-[ribosomal protein uS12]-hydrogen + (sulfur carrier)-H + 5'-deoxyadenosine + L-methionine + A + S-adenosyl-L-homocysteine + 2 H(+). In terms of biological role, catalyzes the methylthiolation of an aspartic acid residue of ribosomal protein uS12. This is Ribosomal protein uS12 methylthiotransferase RimO from Shewanella sp. (strain MR-4).